A 139-amino-acid chain; its full sequence is MLIPRRVKHRKQHHPKRRGQAKGGTQVSFGEYGIQALTPAYVTNRQIEAARIAMTRHIKRGGKVWINIYPDRPLTKKPAETRMGSGKGSPEWWIANVHPGRVMFELSYPNEKIAREALTRAAHKLPMKCRIVKREAGEA.

Basic residues predominate over residues 1-20 (MLIPRRVKHRKQHHPKRRGQ). A disordered region spans residues 1 to 25 (MLIPRRVKHRKQHHPKRRGQAKGGT).

This sequence belongs to the universal ribosomal protein uL16 family. Part of the 50S ribosomal subunit.

In terms of biological role, binds 23S rRNA and is also seen to make contacts with the A and possibly P site tRNAs. The polypeptide is Large ribosomal subunit protein uL16 (Streptomyces avermitilis (strain ATCC 31267 / DSM 46492 / JCM 5070 / NBRC 14893 / NCIMB 12804 / NRRL 8165 / MA-4680)).